Reading from the N-terminus, the 182-residue chain is Adenylate kinase (182 aa).

Residue 12-17 (GAGKGT) coordinates ATP. The tract at residues 32–61 (STGELLRKEIDLDTYLGKQVKDIMNKGELV) is NMP. AMP is bound by residues T33, R38, 59–61 (ELV), 85–88 (GYPR), and Q92. The segment at 126-132 (LRGRKDD) is LID. ATP is bound at residue R127. Positions 129 and 140 each coordinate AMP. Residue G168 coordinates ATP.

This sequence belongs to the adenylate kinase family. As to quaternary structure, monomer.

It is found in the cytoplasm. It catalyses the reaction AMP + ATP = 2 ADP. It functions in the pathway purine metabolism; AMP biosynthesis via salvage pathway; AMP from ADP: step 1/1. Functionally, catalyzes the reversible transfer of the terminal phosphate group between ATP and AMP. Plays an important role in cellular energy homeostasis and in adenine nucleotide metabolism. This is Adenylate kinase from Prochlorococcus marinus (strain MIT 9515).